Reading from the N-terminus, the 368-residue chain is Endophilin-A2 (368 aa).

The interval 1–21 (MSVAGLKKQFYKASQLVSEKV) is membrane-binding amphipathic helix. One can recognise a BAR domain in the interval 18 to 249 (SEKVGGAEGT…LKRRVREASS (232 aa)). The segment at 60–87 (PNPASRAKLTMLNTVSKIRGQVKNPGYP) is required for dimerization upon membrane association. Residues 180–250 (DEELRQALEK…KRRVREASSR (71 aa)) are a coiled coil. The interval 218-254 (LVDAQLDYHRQAVQILEELADKLKRRVREASSRPKRE) is interaction with ARC. The disordered stretch occupies residues 244–307 (VREASSRPKR…MPSKSMPPLD (64 aa)). The span at 245-263 (REASSRPKREFKPRPREPF) shows a compositional bias: basic and acidic residues. Phosphoserine occurs at positions 288 and 292. Residues 306–365 (LDQPSCKALYDFEPENDGELGFREGDLITLTNQIDENWYEGMLHGQSGFFPLSYVQVLVP) form the SH3 domain. At Tyr-315 the chain carries Phosphotyrosine.

The protein belongs to the endophilin family. Interacts with ARC, SYNJ1 and DNM1. Interacts with PDCD6IP. Interacts with BIN2.

The protein resides in the cytoplasm. It localises to the early endosome membrane. Its subcellular location is the cell projection. The protein localises to the podosome. Its function is as follows. Implicated in endocytosis. May recruit other proteins to membranes with high curvature. This chain is Endophilin-A2 (Sh3gl1), found in Mus musculus (Mouse).